Consider the following 698-residue polypeptide: Pheromone-regulated protein PRM7 (698 aa).

Disordered stretches follow at residues 1-65 (MYRT…IGNS), 133-183 (ESTT…SAVT), 197-274 (SVDQ…TVTI), and 455-480 (SASS…DSKT). 2 stretches are compositionally biased toward low complexity: residues 9–56 (EVTT…TTSA) and 158–183 (VTTS…SAVT). A compositionally biased stretch (low complexity) spans 455–465 (SASSSRSSATS).

This is Pheromone-regulated protein PRM7 (PRM7) from Saccharomyces cerevisiae (strain ATCC 204508 / S288c) (Baker's yeast).